The chain runs to 200 residues: Dephospho-CoA kinase (200 aa).

Residues 3–200 (KVGLTGGIGS…EELQRRLHSR (198 aa)) enclose the DPCK domain. ATP is bound at residue 11–16 (GSGKSS).

This sequence belongs to the CoaE family.

The protein resides in the cytoplasm. It catalyses the reaction 3'-dephospho-CoA + ATP = ADP + CoA + H(+). The protein operates within cofactor biosynthesis; coenzyme A biosynthesis; CoA from (R)-pantothenate: step 5/5. Its function is as follows. Catalyzes the phosphorylation of the 3'-hydroxyl group of dephosphocoenzyme A to form coenzyme A. The protein is Dephospho-CoA kinase of Thermobifida fusca (strain YX).